Reading from the N-terminus, the 462-residue chain is TNF receptor-associated factor family protein DDB_G0267754 (462 aa).

The segment at 24 to 62 (CCVCECLLIEALQCRNGHVACKNCFIKIVKSKKECMTCR) adopts an RING-type; degenerate zinc-finger fold. The disordered stretch occupies residues 104–127 (KNGNGNEGSSANEIEQPQQPQQQQ). 2 TRAF-type zinc fingers span residues 150–217 (SHLK…SHTE) and 214–273 (SHTE…NQLA). One can recognise an MATH domain in the interval 326-449 (MFRGKWVISN…NDTLTINFSI (124 aa)).

The protein belongs to the TNF receptor-associated factor family. A subfamily.

Its subcellular location is the cytoplasm. Its function is as follows. Probable adapter protein and signal transducer that links members of the tumor necrosis factor receptor family to different signaling pathways by association with the receptor cytoplasmic domain and kinases. This is TNF receptor-associated factor family protein DDB_G0267754 from Dictyostelium discoideum (Social amoeba).